The primary structure comprises 136 residues: Protein YebF (136 aa).

The N-terminal stretch at 1–23 (MKKTGLALVLATILLGMMGSVHA) is a signal peptide. The YebF/Cmi domain occupies 30-117 (KVPACIGLNQ…KSGTMTYTGL (88 aa)). A disulfide bond links cysteine 34 and cysteine 107. Residues 117 to 136 (LNAQTRPDPQIGLNSQAGPK) are disordered.

It belongs to the YebF family.

The protein localises to the secreted. The protein is Protein YebF of Yersinia pseudotuberculosis serotype O:1b (strain IP 31758).